A 692-amino-acid chain; its full sequence is Elongation factor G (692 aa).

One can recognise a tr-type G domain in the interval 8–282 (EKTRNIGIMA…GVVDYLPSPV (275 aa)). GTP contacts are provided by residues 17–24 (AHIDAGKT), 81–85 (DTPGH), and 135–138 (NKMD).

This sequence belongs to the TRAFAC class translation factor GTPase superfamily. Classic translation factor GTPase family. EF-G/EF-2 subfamily.

It is found in the cytoplasm. Functionally, catalyzes the GTP-dependent ribosomal translocation step during translation elongation. During this step, the ribosome changes from the pre-translocational (PRE) to the post-translocational (POST) state as the newly formed A-site-bound peptidyl-tRNA and P-site-bound deacylated tRNA move to the P and E sites, respectively. Catalyzes the coordinated movement of the two tRNA molecules, the mRNA and conformational changes in the ribosome. In Geobacillus kaustophilus (strain HTA426), this protein is Elongation factor G.